The following is a 255-amino-acid chain: 3-deoxy-manno-octulosonate cytidylyltransferase (255 aa).

This sequence belongs to the KdsB family.

The protein localises to the cytoplasm. The catalysed reaction is 3-deoxy-alpha-D-manno-oct-2-ulosonate + CTP = CMP-3-deoxy-beta-D-manno-octulosonate + diphosphate. The protein operates within nucleotide-sugar biosynthesis; CMP-3-deoxy-D-manno-octulosonate biosynthesis; CMP-3-deoxy-D-manno-octulosonate from 3-deoxy-D-manno-octulosonate and CTP: step 1/1. It participates in bacterial outer membrane biogenesis; lipopolysaccharide biosynthesis. Activates KDO (a required 8-carbon sugar) for incorporation into bacterial lipopolysaccharide in Gram-negative bacteria. This is 3-deoxy-manno-octulosonate cytidylyltransferase from Psychromonas ingrahamii (strain DSM 17664 / CCUG 51855 / 37).